The primary structure comprises 391 residues: Probable chaperonin-like protein PrmG (391 aa).

Positions 153–191 (TTRWSVRSSPPPSNTSARTASSPPRRATHSGCRSRSSTA) are disordered. The span at 154–174 (TRWSVRSSPPPSNTSARTASS) shows a compositional bias: polar residues.

The protein belongs to the chaperonin (HSP60) family.

Its function is as follows. Probably plays an essential role in the productive folding of PrmA and PrmC, and thus in the formation of the active PrmABCD complex. The sequence is that of Probable chaperonin-like protein PrmG from Gordonia sp. (strain TY-5).